Reading from the N-terminus, the 931-residue chain is Phosphoenolpyruvate carboxylase (931 aa).

Catalysis depends on residues His138 and Lys594.

Belongs to the PEPCase type 1 family. The cofactor is Mg(2+).

It catalyses the reaction oxaloacetate + phosphate = phosphoenolpyruvate + hydrogencarbonate. In terms of biological role, forms oxaloacetate, a four-carbon dicarboxylic acid source for the tricarboxylic acid cycle. The sequence is that of Phosphoenolpyruvate carboxylase from Streptococcus agalactiae serotype Ia (strain ATCC 27591 / A909 / CDC SS700).